A 154-amino-acid polypeptide reads, in one-letter code: MEKKLPRIKALLTPGEVAKRSGVAVSALHFYESKGLITSIRNSGNQRRYKRDVLRYVAIIKIAQRIGIPLATIGEAFGVLPEGHTLSAKEWKQLSSQWREELDRRIHTLVALRDELDGCIGCGCLSRSDCPLRNPGDRLGEEGTGARLLEDEQN.

The region spanning 11 to 79 (LLTPGEVAKR…LATIGEAFGV (69 aa)) is the HTH merR-type domain. The segment at residues 14-33 (PGEVAKRSGVAVSALHFYES) is a DNA-binding region (H-T-H motif). [2Fe-2S] cluster-binding residues include Cys-119, Cys-122, Cys-124, and Cys-130. The might be part of a sensor region stretch occupies residues 119–130 (CIGCGCLSRSDC). The disordered stretch occupies residues 135-154 (PGDRLGEEGTGARLLEDEQN).

As to quaternary structure, homodimer.

Functionally, activates the transcription of the soxS gene which itself controls the superoxide response regulon. SoxR contains a 2Fe-2S iron-sulfur cluster that may act as a redox sensor system that recognizes superoxide. The variable redox state of the Fe-S cluster is employed in vivo to modulate the transcriptional activity of SoxR in response to specific types of oxidative stress. Upon reduction of 2Fe-2S cluster, SoxR reversibly loses its transcriptional activity, but retains its DNA binding affinity. This chain is Redox-sensitive transcriptional activator SoxR (soxR), found in Escherichia coli O157:H7.